The following is a 252-amino-acid chain: Major prion protein (252 aa).

The signal sequence occupies residues 1 to 22; that stretch reads MANLGYWMLVLFVATWSDLGLC. Positions 23-229 are interaction with GRB2, ERI3 and SYN1; sequence KKRPKPGGWN…ESQAYYQRGS (207 aa). A disordered region spans residues 26–104; sequence PKPGGWNTGG…HNQWNKPSKP (79 aa). 5 tandem repeats follow at residues 51–58, 59–66, 67–74, 75–82, and 83–90. Positions 51–90 are 5 X 8 AA tandem repeats of P-H-G-G-G-W-G-Q; the sequence is PQGGGWGQPHGGGWGQPHGGGWGQPHGGGWGQPHGGGWGQ. The segment covering 52 to 92 has biased composition (gly residues); it reads QGGGWGQPHGGGWGQPHGGGWGQPHGGGWGQPHGGGWGQAG. Residues histidine 60, glycine 61, glycine 62, histidine 68, glycine 69, glycine 70, histidine 76, glycine 77, glycine 78, histidine 84, glycine 85, and glycine 86 each coordinate Cu(2+). The cysteines at positions 178 and 213 are disulfide-linked. Residues asparagine 180 and asparagine 196 are each glycosylated (N-linked (GlcNAc...) asparagine). Serine 229 is lipidated: GPI-anchor amidated serine. Residues 230-252 constitute a propeptide, removed in mature form; that stretch reads SMVLFSSPPVILLISFLIFLIVG.

This sequence belongs to the prion family. Monomer and homodimer. Has a tendency to aggregate into amyloid fibrils containing a cross-beta spine, formed by a steric zipper of superposed beta-strands. Soluble oligomers may represent an intermediate stage on the path to fibril formation. Copper binding may promote oligomerization. Interacts with GRB2, APP, ERI3/PRNPIP and SYN1. Mislocalized cytosolically exposed PrP interacts with MGRN1; this interaction alters MGRN1 subcellular location and causes lysosomal enlargement. Interacts with KIAA1191.

It localises to the cell membrane. It is found in the golgi apparatus. In terms of biological role, its primary physiological function is unclear. Has cytoprotective activity against internal or environmental stresses. May play a role in neuronal development and synaptic plasticity. May be required for neuronal myelin sheath maintenance. May play a role in iron uptake and iron homeostasis. Soluble oligomers are toxic to cultured neuroblastoma cells and induce apoptosis (in vitro). Association with GPC1 (via its heparan sulfate chains) targets PRNP to lipid rafts. Also provides Cu(2+) or Zn(2+) for the ascorbate-mediated GPC1 deaminase degradation of its heparan sulfate side chains. The polypeptide is Major prion protein (PRNP) (Ateles paniscus (Black spider monkey)).